Consider the following 211-residue polypeptide: Nucleoside triphosphate pyrophosphatase (211 aa).

Asp75 functions as the Proton acceptor in the catalytic mechanism.

The protein belongs to the Maf family. It depends on a divalent metal cation as a cofactor.

It localises to the cytoplasm. It carries out the reaction a ribonucleoside 5'-triphosphate + H2O = a ribonucleoside 5'-phosphate + diphosphate + H(+). It catalyses the reaction a 2'-deoxyribonucleoside 5'-triphosphate + H2O = a 2'-deoxyribonucleoside 5'-phosphate + diphosphate + H(+). Its function is as follows. Nucleoside triphosphate pyrophosphatase. May have a dual role in cell division arrest and in preventing the incorporation of modified nucleotides into cellular nucleic acids. The chain is Nucleoside triphosphate pyrophosphatase from Prochlorococcus marinus (strain NATL1A).